The sequence spans 790 residues: Endonuclease MutS2 (790 aa).

An ATP-binding site is contributed by G334–T341. Residues I715–K790 form the Smr domain.

It belongs to the DNA mismatch repair MutS family. MutS2 subfamily. Homodimer. Binds to stalled ribosomes, contacting rRNA.

In terms of biological role, endonuclease that is involved in the suppression of homologous recombination and thus may have a key role in the control of bacterial genetic diversity. Functionally, acts as a ribosome collision sensor, splitting the ribosome into its 2 subunits. Detects stalled/collided 70S ribosomes which it binds and splits by an ATP-hydrolysis driven conformational change. Acts upstream of the ribosome quality control system (RQC), a ribosome-associated complex that mediates the extraction of incompletely synthesized nascent chains from stalled ribosomes and their subsequent degradation. Probably generates substrates for RQC. This chain is Endonuclease MutS2, found in Alkaliphilus oremlandii (strain OhILAs) (Clostridium oremlandii (strain OhILAs)).